A 119-amino-acid polypeptide reads, in one-letter code: Circadian clock oscillator protein KaiB (119 aa).

This sequence belongs to the KaiB family. The KaiABC complex composition changes during the circadian cycle to control KaiC phosphorylation. Complexes KaiC(6), KaiA(2-4):KaiC(6), KaiB(6):KaiC(6) and KaiC(6):KaiB(6):KaiA(12) are among the most important forms, many form cooperatively. Undergoes a major conformational rearrangment; in the free state forms homotetramers as a dimer of dimers. When bound to the CI domain of KaiC switches to a monomeric thioredoxin-fold (KaiB(fs)). KaiB(fs) binds CikA, leading it to dephosphorylate phospho-RpaA.

Functionally, key component of the KaiABC oscillator complex, which constitutes the main circadian regulator in cyanobacteria. Complex composition changes during the circadian cycle to control KaiC phosphorylation. KaiA stimulates KaiC autophosphorylation, while KaiB sequesters KaiA, leading to KaiC autodephosphorylation. Phospho-Ser-431 KaiC accumulation triggers binding of KaiB to form the KaiB(6):KaiC(6) complex, leading to changes in output regulators CikA and SasA. KaiB switches to a thioredoxin-like fold (KaiB(fs)) when bound to KaiC. KaiB(6):KaiC(6) formation exposes a site for KaiA binding that sequesters KaiA from KaiC, making the KaiC(6):KaiB(6):KaiA(12) complex that results in KaiC autodephosphorylation. Its function is as follows. A metamorphic protein which reversibly switches between an inactive tetrameric fold and a rare, thioredoxin-like monomeric fold (KaiB(fs)). KaiB(fs) binds phospho-KaiC, KaiA and CikA. KaiA and CikA compete for binding to KaiB(fs), and KaiB(fs) and SasA compete for binding to KaiC, thus the clock oscillator and output signal pathway are tightly coupled. The protein is Circadian clock oscillator protein KaiB of Synechococcus sp. (strain CC9311).